A 487-amino-acid chain; its full sequence is UPF0324 membrane protein NE0724 (487 aa).

11 consecutive transmembrane segments (helical) span residues 19-38 (WAVWLGLIMFMASVSSLWGW), 71-93 (PALSLLVTYLVFTALTCLAAWSM), 100-119 (FFIGWTILFIMTWVIWIIGN), 139-161 (LSLGSGFSYLLALLVGLVIGNFF), 181-200 (AIVFLGIKIGVMSIEAAGFI), 204-226 (VMTGVAATFVAYMLFWPIVYALG), 269-291 (VSILVVIFAMFELIILPGFYTAI), 350-369 (IWIDMFIGVWAFVLALVWVY), 389-411 (FPKFVLGYLLVWFSYIMLASSGS), 426-443 (GPMRNMMFMLTFISIGII), and 456-478 (ALLYAIALFGIIAPIAYGVAWIF).

The protein belongs to the UPF0324 family.

The protein resides in the cell membrane. This Nitrosomonas europaea (strain ATCC 19718 / CIP 103999 / KCTC 2705 / NBRC 14298) protein is UPF0324 membrane protein NE0724.